The primary structure comprises 42 residues: MKLIAAYLLAYLGGNSSPSAADVKDILNAVGAEANEEKLEFL.

This sequence belongs to the eukaryotic ribosomal protein P1/P2 family. P1 and P2 exist as dimers at the large ribosomal subunit. Phosphorylated.

In terms of biological role, plays an important role in the elongation step of protein synthesis. This Triticum aestivum (Wheat) protein is Large ribosomal subunit protein P2.